The sequence spans 904 residues: Envelope glycoprotein B (904 aa).

Positions 1 to 30 are cleaved as a signal peptide; the sequence is MRQGAPARGCRWFVVWALLGLTLGVLVASA. Positions 31 to 65 are enriched in low complexity; that stretch reads APSSPGTPGVAAATQAANGGPATPAPPALGAAPTG. The segment at 31 to 88 is disordered; sequence APSSPGTPGVAAATQAANGGPATPAPPALGAAPTGDPKPKKNKKPKNPTPPRPAGDNA. At 31–774 the chain is on the virion surface side; the sequence is APSSPGTPGV…SGVSSFMSNP (744 aa). Residues Asn87 and Asn141 are each glycosylated (N-linked (GlcNAc...) asparagine; by host). 5 disulfides stabilise this stretch: Cys116-Cys573, Cys133-Cys529, Cys207-Cys271, Cys364-Cys412, and Cys596-Cys633. 2 involved in fusion and/or binding to host membrane regions span residues 173–179 and 258–265; these read VWFGHRY and RVEAFHRY. N-linked (GlcNAc...) asparagine; by host glycosylation is found at Asn398 and Asn430. The interval 470-492 is disordered; that stretch reads REQSRKPPNPTPPPPGASANASV. Pro residues predominate over residues 476–485; the sequence is PPNPTPPPPG. A glycan (N-linked (GlcNAc...) asparagine; by host) is linked at Asn489. An N-linked (GlcNAc...) asparagine; by host glycan is attached at Asn674. The hydrophobic membrane proximal region stretch occupies residues 719 to 772; sequence IDTVIHADANAAMFAGLGAFFEGMGDLGRAVGKVVMGIVGGVVSAVSGVSSFMS. The helical transmembrane segment at 775 to 795 threads the bilayer; sequence FGALAVGLLVLAGLAAAFFAF. Topologically, residues 796 to 904 are intravirion; the sequence is RYVMRLQSNP…KDGDADEDDL (109 aa). A Golgi targeting motif is present at residues 849–852; that stretch reads YMAL. Residues 883–904 form a disordered region; it reads KRRNTNYTQVPNKDGDADEDDL. The Internalization motif motif lies at 889–892; it reads YTQV.

The protein belongs to the herpesviridae glycoprotein B family. In terms of assembly, homotrimer; disulfide-linked. Interacts with host receptor MYH9/NMMHC-IIA. Interacts with host receptor MYH10/NMMHC-IIB. Binds to heparan sulfate proteoglycans. Interacts with gH/gL heterodimer. Post-translationally, the cytoplasmic tail is phosphorylated by the viral kinase US3. Phosphorylation may be linked to a down-regulation of gB expression on cell surface. In terms of processing, ubiquitinated.

The protein resides in the virion membrane. It is found in the host cell membrane. It localises to the host endosome membrane. Its subcellular location is the host Golgi apparatus membrane. Functionally, envelope glycoprotein that forms spikes at the surface of virion envelope and binds to the host cell entry receptors MYH9/NMMHC-IIA and MYH10/NMMHC-IIB, promoting the virus entry into host cells. Essential for the initial attachment to heparan sulfate moieties of the host cell surface proteoglycans. Involved in fusion of viral and cellular membranes leading to virus entry into the host cell: following initial binding to its host cell entry receptors, membrane fusion is mediated by the fusion machinery composed at least of gB and the heterodimer gH/gL. May be involved in the fusion between the virion envelope and the outer nuclear membrane during virion egress. Also plays a role, together with gK, in virus-induced cell-to-cell fusion (syncytia formation). The chain is Envelope glycoprotein B from Homo sapiens (Human).